Consider the following 576-residue polypeptide: Arginine--tRNA ligase (576 aa).

The 'HIGH' region signature appears at 122-132; the sequence is PNVAKEMHVGH.

Belongs to the class-I aminoacyl-tRNA synthetase family. As to quaternary structure, monomer.

The protein localises to the cytoplasm. The catalysed reaction is tRNA(Arg) + L-arginine + ATP = L-arginyl-tRNA(Arg) + AMP + diphosphate. This is Arginine--tRNA ligase from Pectobacterium carotovorum subsp. carotovorum (strain PC1).